The sequence spans 172 residues: LOB domain-containing protein 4 (172 aa).

The LOB domain maps to 12-113; that stretch reads SPCAACKLLR…AQLALAQAEV (102 aa). The segment at 125-152 is disordered; that stretch reads PGHGLCPDSPSSSGSPSSKQVSPQDNKG. Residues 131-147 show a composition bias toward low complexity; sequence PDSPSSSGSPSSKQVSP.

The protein belongs to the LOB domain-containing protein family. Expressed in young shoots, roots, stems, leaves and flowers.

The polypeptide is LOB domain-containing protein 4 (LBD4) (Arabidopsis thaliana (Mouse-ear cress)).